A 431-amino-acid chain; its full sequence is Protein farnesyltransferase subunit beta (431 aa).

5 PFTB repeats span residues 130–171 (KRKI…SLCD), 182–224 (RKGI…TLLN), 231–273 (TEGV…AILR), 280–322 (VEKL…AILE), and 332–375 (KHAL…AVAE). Residues 258-261 (HGGY) and 301-304 (RSNK) contribute to the (2E,6E)-farnesyl diphosphate site. Positions 307 and 309 each coordinate Zn(2+). Residue 310 to 313 (YSFW) coordinates (2E,6E)-farnesyl diphosphate. H363 is a binding site for Zn(2+).

It belongs to the protein prenyltransferase subunit beta family. In terms of assembly, heterodimer of an alpha (RAM2) and a beta (RAM1) subunit. Zn(2+) serves as cofactor.

It localises to the cytoplasm. The catalysed reaction is L-cysteinyl-[protein] + (2E,6E)-farnesyl diphosphate = S-(2E,6E)-farnesyl-L-cysteinyl-[protein] + diphosphate. Its function is as follows. Catalyzes the transfer of a farnesyl moiety from farnesyl diphosphate to a cysteine at the fourth position from the C-terminus of several proteins having the C-terminal sequence Cys-aliphatic-aliphatic-X where X is Ser, Ala, Met, Cys, or Gln. Required for the membrane localization of proteins such as a-factor, Ras proteins and other membrane proteins containing the C-terminal CAAX motif. The beta subunit is responsible for isoprenoid and peptide-binding. This chain is Protein farnesyltransferase subunit beta, found in Saccharomyces cerevisiae (strain ATCC 204508 / S288c) (Baker's yeast).